The following is a 115-amino-acid chain: NADH-ubiquinone oxidoreductase chain 3 (115 aa).

3 helical membrane passes run 3 to 23, 56 to 76, and 84 to 104; these read LILM…IVAF, FFLV…LLPL, and PTLM…GLIY.

This sequence belongs to the complex I subunit 3 family.

It is found in the mitochondrion membrane. It catalyses the reaction a ubiquinone + NADH + 5 H(+)(in) = a ubiquinol + NAD(+) + 4 H(+)(out). Core subunit of the mitochondrial membrane respiratory chain NADH dehydrogenase (Complex I) that is believed to belong to the minimal assembly required for catalysis. Complex I functions in the transfer of electrons from NADH to the respiratory chain. The immediate electron acceptor for the enzyme is believed to be ubiquinone. The polypeptide is NADH-ubiquinone oxidoreductase chain 3 (MT-ND3) (Polypterus ornatipinnis (Ornate bichir)).